The following is a 217-amino-acid chain: Small ribosomal subunit protein uS3 (217 aa).

The KH type-2 domain occupies 38 to 106 (IRKFIQKELA…QVHINIVEIK (69 aa)).

This sequence belongs to the universal ribosomal protein uS3 family. In terms of assembly, part of the 30S ribosomal subunit. Forms a tight complex with proteins S10 and S14.

Its function is as follows. Binds the lower part of the 30S subunit head. Binds mRNA in the 70S ribosome, positioning it for translation. The chain is Small ribosomal subunit protein uS3 from Streptococcus thermophilus (strain CNRZ 1066).